A 365-amino-acid chain; its full sequence is GTPase Obg (365 aa).

The Obg domain occupies 1–159 (MKFIDEARIE…RMLKLELKVL (159 aa)). One can recognise an OBG-type G domain in the interval 160-334 (ADVGLLGMPN…LIYAIKDHLQ (175 aa)). Residues 166-173 (GMPNAGKS), 191-195 (FTTLH), 213-216 (DIPG), 284-287 (NKLD), and 315-317 (SAL) each bind GTP. Mg(2+) contacts are provided by S173 and T193.

This sequence belongs to the TRAFAC class OBG-HflX-like GTPase superfamily. OBG GTPase family. As to quaternary structure, monomer. Mg(2+) is required as a cofactor.

Its subcellular location is the cytoplasm. Functionally, an essential GTPase which binds GTP, GDP and possibly (p)ppGpp with moderate affinity, with high nucleotide exchange rates and a fairly low GTP hydrolysis rate. Plays a role in control of the cell cycle, stress response, ribosome biogenesis and in those bacteria that undergo differentiation, in morphogenesis control. The protein is GTPase Obg of Cupriavidus necator (strain ATCC 17699 / DSM 428 / KCTC 22496 / NCIMB 10442 / H16 / Stanier 337) (Ralstonia eutropha).